The sequence spans 211 residues: PITH domain-containing protein CG6153 (211 aa).

A PITH domain is found at 20-192 (DHALEMGIEY…GVTICNYESR (173 aa)).

It belongs to the PITHD1 family.

The sequence is that of PITH domain-containing protein CG6153 from Drosophila melanogaster (Fruit fly).